A 569-amino-acid polypeptide reads, in one-letter code: CTP synthase (569 aa).

Residues 1–276 (MNQATPTKHV…DAYLVRRLDL (276 aa)) form an amidoligase domain region. Ser18 contacts CTP. Residue Ser18 participates in UTP binding. ATP is bound by residues 19 to 24 (SLGKGL) and Asp76. Residues Asp76 and Glu150 each contribute to the Mg(2+) site. Residues 157 to 159 (DIE), 197 to 202 (KTKPTQ), and Lys233 contribute to the CTP site. Residues 197–202 (KTKPTQ) and Lys233 contribute to the UTP site. Residues 301 to 550 (TVALVGKYVD…VGAAIERQRE (250 aa)) enclose the Glutamine amidotransferase type-1 domain. Gly364 is a binding site for L-glutamine. Residue Cys391 is the Nucleophile; for glutamine hydrolysis of the active site. Residues 392 to 395 (LGLQ), Glu415, and Arg476 each bind L-glutamine. Catalysis depends on residues His523 and Glu525.

It belongs to the CTP synthase family. Homotetramer.

It catalyses the reaction UTP + L-glutamine + ATP + H2O = CTP + L-glutamate + ADP + phosphate + 2 H(+). The enzyme catalyses L-glutamine + H2O = L-glutamate + NH4(+). The catalysed reaction is UTP + NH4(+) + ATP = CTP + ADP + phosphate + 2 H(+). It participates in pyrimidine metabolism; CTP biosynthesis via de novo pathway; CTP from UDP: step 2/2. Allosterically activated by GTP, when glutamine is the substrate; GTP has no effect on the reaction when ammonia is the substrate. The allosteric effector GTP functions by stabilizing the protein conformation that binds the tetrahedral intermediate(s) formed during glutamine hydrolysis. Inhibited by the product CTP, via allosteric rather than competitive inhibition. Its function is as follows. Catalyzes the ATP-dependent amination of UTP to CTP with either L-glutamine or ammonia as the source of nitrogen. Regulates intracellular CTP levels through interactions with the four ribonucleotide triphosphates. The protein is CTP synthase of Nocardioides sp. (strain ATCC BAA-499 / JS614).